Reading from the N-terminus, the 232-residue chain is MQVSDLFIREMPSDCLPRERLLAIGEKALSNQELLAILLRTGSKEADVMTVAATLLKQFKQLSYLQQATLNELMAIKGIGQVKAIELRAAIELGCRIYQSSQIKFGKVTSSQQVAQRLLQEMKGLQQEHLICIYLNTKNDIIQQKTIFKGSLNQSIAHPREIFREAVKYSSARILLAHNHPSGNPTPSPQDIQFTKRMEECGEMMGIQLLDHIILGDSGYISLREENFFASE.

The MPN domain occupies 107 to 229 (KVTSSQQVAQ…YISLREENFF (123 aa)). Residues H178, H180, and D191 each contribute to the Zn(2+) site. The JAMM motif motif lies at 178–191 (HNHPSGNPTPSPQD).

Belongs to the UPF0758 family.

In Enterococcus faecalis (strain ATCC 700802 / V583), this protein is UPF0758 protein EF_2926.